A 476-amino-acid chain; its full sequence is Aspartyl/glutamyl-tRNA(Asn/Gln) amidotransferase subunit B (476 aa).

It belongs to the GatB/GatE family. GatB subfamily. Heterotrimer of A, B and C subunits.

The enzyme catalyses L-glutamyl-tRNA(Gln) + L-glutamine + ATP + H2O = L-glutaminyl-tRNA(Gln) + L-glutamate + ADP + phosphate + H(+). It carries out the reaction L-aspartyl-tRNA(Asn) + L-glutamine + ATP + H2O = L-asparaginyl-tRNA(Asn) + L-glutamate + ADP + phosphate + 2 H(+). In terms of biological role, allows the formation of correctly charged Asn-tRNA(Asn) or Gln-tRNA(Gln) through the transamidation of misacylated Asp-tRNA(Asn) or Glu-tRNA(Gln) in organisms which lack either or both of asparaginyl-tRNA or glutaminyl-tRNA synthetases. The reaction takes place in the presence of glutamine and ATP through an activated phospho-Asp-tRNA(Asn) or phospho-Glu-tRNA(Gln). The chain is Aspartyl/glutamyl-tRNA(Asn/Gln) amidotransferase subunit B from Lacticaseibacillus casei (strain BL23) (Lactobacillus casei).